Here is a 574-residue protein sequence, read N- to C-terminus: MNQTRVFLIFAWLMVAALLWMEWGKEKAAANAPVAAATQSVPAARDLDAATPSAANVPAAQAIPQAGAPGKVPATSTTTATPAAAGTAPVVTLTSDVLRLKLDGRSVLDAELLQFPQTKDGTAPVSLLTEDAAHPYNATSGWASEHSPVPGVGGFRAEQPGTTFELAKGQNTLVVPFVWNGPNGVSIRRTFTLERGRYAISIKDEVINKSAAPWNGYVFRKLSRVPTILSRGMTNPDSFSFNGATWYSPQAGYERRAFKDYMDDGGLNRQITGGWIALLQHHFFTAWIPQNDQASLYVLNKDGPRDVAELRGPAFTVAPGQTATTEARLWVGPKLVSLIAKEDVKGLDRVIDYSRFSIMAIIGQGLFWVLSHLHSFLHNWGWAIVGLVVLLRLVLYPLSSAQYKSSAKMRKFQPRLAQLKERYGDDRVKYQQATMELFKKEKINPMGGCLPLLIQMPIFFALYWVLVESVELRQAPWLGWIQDLTARDPHFILPALNIAIMWATQKLTPTPGIDPMQAKMMQFMPLVFGAMMAFVPSGLVLYWVVNGGLNLLIQWWMIRQHGEKPSKIIRANAK.

The next 6 helical transmembrane spans lie at 6-26, 350-370, 376-396, 447-467, 491-511, and 525-545; these read VFLI…WGKE, VIDY…FWVL, FLHN…LVLY, GGCL…WVLV, FILP…TPTP, and PLVF…YWVV.

The protein belongs to the OXA1/ALB3/YidC family. Type 1 subfamily. Interacts with the Sec translocase complex via SecD. Specifically interacts with transmembrane segments of nascent integral membrane proteins during membrane integration.

It localises to the cell inner membrane. In terms of biological role, required for the insertion and/or proper folding and/or complex formation of integral membrane proteins into the membrane. Involved in integration of membrane proteins that insert both dependently and independently of the Sec translocase complex, as well as at least some lipoproteins. Aids folding of multispanning membrane proteins. This is Membrane protein insertase YidC from Xanthomonas oryzae pv. oryzae (strain KACC10331 / KXO85).